Consider the following 279-residue polypeptide: Phosphate-binding protein PstS (279 aa).

The signal sequence occupies residues 1 to 18 (MKKVIILIFMLSTSLLYN). C19 is lipidated: N-palmitoyl cysteine. A lipid anchor (S-diacylglycerol cysteine) is attached at C19. Phosphate is bound by residues 33–35 (STT), S63, and 151–153 (SGS).

It belongs to the PstS family. As to quaternary structure, monomer (in vitro). The complex is composed of two ATP-binding proteins (PstB), two transmembrane proteins (PstC and PstA) and a solute-binding protein (PstS).

The protein localises to the cell membrane. Its function is as follows. Binds inorganic phosphate with a Kd of 1.2 uM. Part of the ABC transporter complex PstSACB involved in phosphate import. In Borreliella burgdorferi (strain ATCC 35210 / DSM 4680 / CIP 102532 / B31) (Borrelia burgdorferi), this protein is Phosphate-binding protein PstS.